The following is a 261-amino-acid chain: MKNFKEVIIIFDSGIGGLSYFKYIKSRIGGCQYVYVADNKNFPYGEKSPEYLLEAVLFLIEKLKKIYNIGALVLACNTISVSVYNKLNFVFPVVYTLPDVSSVSDLVLKRVLLIATNTTLESKFVKDQVNIHNDLIVKAAGELVNFVEYGENYKKYALRCLEALKFEVVNTGREIVFLGCTHYLHLKVMIEDFLKIPVYENRELVVKNLIRSMNFSEHKGNYYKNDFDFVDDEFYLTENKNLTFYQNFCKKYNLRFKGMIV.

Substrate contacts are provided by residues Asp12–Ser13 and Tyr44–Gly45. Catalysis depends on Cys76, which acts as the Proton donor/acceptor. Asn77–Thr78 contributes to the substrate binding site. Cys180 serves as the catalytic Proton donor/acceptor. Substrate is bound at residue Thr181 to His182.

It belongs to the aspartate/glutamate racemases family.

The enzyme catalyses L-glutamate = D-glutamate. It functions in the pathway cell wall biogenesis; peptidoglycan biosynthesis. Its function is as follows. Provides the (R)-glutamate required for cell wall biosynthesis. In Borreliella burgdorferi (strain ATCC 35210 / DSM 4680 / CIP 102532 / B31) (Borrelia burgdorferi), this protein is Glutamate racemase.